A 127-amino-acid polypeptide reads, in one-letter code: Major sperm protein 63 (127 aa).

Residue Ala2 is modified to N-acetylalanine. An MSP domain is found at 9 to 126; that stretch reads DIQTQPGTKI…RRKNLPIEYN (118 aa).

As to expression, sperm.

Its subcellular location is the cell projection. The protein resides in the pseudopodium. The protein localises to the cytoplasm. It is found in the cytoskeleton. In terms of biological role, central component in molecular interactions underlying sperm crawling. Forms an extensive filament system that extends from sperm villipoda, along the leading edge of the pseudopod. This chain is Major sperm protein 63 (msp-63), found in Caenorhabditis elegans.